The primary structure comprises 376 residues: Homocitrate synthase (376 aa).

The Pyruvate carboxyltransferase domain occupies 4–259 (WKIIDSTLRE…RRKYKLEMLP (256 aa)). Arg-12 is a binding site for 2-oxoglutarate. Mg(2+) is bound at residue Glu-13. His-72 contacts 2-oxoglutarate. Asp-92 is an L-lysine binding site. Arg-133 lines the 2-oxoglutarate pocket. Ser-135 and Thr-166 together coordinate L-lysine. 2-oxoglutarate is bound at residue Thr-166. 2 residues coordinate Mg(2+): His-195 and His-197. His-292 functions as the Proton acceptor in the catalytic mechanism.

The protein belongs to the alpha-IPM synthase/homocitrate synthase family. Homocitrate synthase LYS20/LYS21 subfamily. As to quaternary structure, exists in an equilibrium between monomer and homodimer. It depends on Mg(2+) as a cofactor. Mn(2+) is required as a cofactor.

The protein localises to the cytoplasm. The enzyme catalyses acetyl-CoA + 2-oxoglutarate + H2O = (2R)-homocitrate + CoA + H(+). It catalyses the reaction oxaloacetate + acetyl-CoA + H2O = citrate + CoA + H(+). It functions in the pathway amino-acid biosynthesis; L-lysine biosynthesis via AAA pathway; L-alpha-aminoadipate from 2-oxoglutarate: step 1/5. Is highly and competitively inhibited by lysine that binds to the active site and competes with 2-oxoglutarate. Is also slightly inhibited by arginine and 2-aminoethylcysteine. Catalyzes the aldol-type condensation of 2-oxoglutarate with acetyl-CoA to yield homocitrate. Carries out the first step of the alpha-aminoadipate (AAA) lysine biosynthesis pathway. To a lesser extent, can also use oxaloacetate in place of 2-oxoglutarate, leading to citrate. Does not display 2-isopropylmalate synthase activity since it cannot use 2-oxoisovalerate. In Thermus thermophilus (strain ATCC BAA-163 / DSM 7039 / HB27), this protein is Homocitrate synthase.